The sequence spans 360 residues: C-X-C chemokine receptor type 2 (360 aa).

Topologically, residues 1–48 (MEDFNMESDSFEDFWKGEDLSNYSYSSTLPPFLLDAAPCEPESLEINK) are extracellular. A glycan (N-linked (GlcNAc...) asparagine) is linked at asparagine 22. The chain crosses the membrane as a helical span at residues 49–75 (YFVVIIYALVFLLSLLGNSLVMLVILY). Topologically, residues 76–84 (SRVGRSVTD) are cytoplasmic. The chain crosses the membrane as a helical span at residues 85–105 (VYLLNLALADLLFALTLPIWA). The Extracellular portion of the chain corresponds to 106-120 (ASKVNGWIFGTFLCK). Residues cysteine 119 and cysteine 196 are joined by a disulfide bond. The chain crosses the membrane as a helical span at residues 121–142 (VVSLLKEVNFYSGILLLACISV). At 143 to 163 (DRYLAIVHATRTLTQKRYLVK) the chain is on the cytoplasmic side. Residues 164 to 183 (FICLSIWGLSLLLALPVLLF) traverse the membrane as a helical segment. At 184-208 (RRTVYSSNVSPACYEDMGNNTANWR) the chain is on the extracellular side. The chain crosses the membrane as a helical span at residues 209 to 231 (MLLRILPQSFGFIVPLLIMLFCY). The Cytoplasmic portion of the chain corresponds to 232-251 (GFTLRTLFKAHMGQKHRAMR). The helical transmembrane segment at 252-273 (VIFAVVLIFLLCWLPYNLVLLA) threads the bilayer. At 274–294 (DTLMRTQVIQETCERRNHIDR) the chain is on the extracellular side. The chain crosses the membrane as a helical span at residues 295–315 (ALDATEILGILHSCLNPLIYA). At 316–360 (FIGQKFRHGLLKILAIHGLISKDSLPKDSRPSFVGSSSGHTSTTL) the chain is on the cytoplasmic side. Residues serine 347, serine 351, serine 352, and serine 353 each carry the phosphoserine modification.

It belongs to the G-protein coupled receptor 1 family. As to quaternary structure, interacts with IL8. Interacts with GNAI2. In terms of processing, phosphorylated upon ligand binding; which is required for desensitization. (Microbial infection) Proteolytically cleaved by Staphylococcus aureus staphopain A/SspP. This cleavage inhibits CXCR2-dependent neutrophil activation and chemotaxis.

The protein localises to the cell membrane. In terms of biological role, receptor for interleukin-8 which is a powerful neutrophil chemotactic factor. Binding of IL-8 to the receptor causes activation of neutrophils. This response is mediated via a G-protein that activates a phosphatidylinositol-calcium second messenger system. Binds to IL-8 with high affinity. Also binds with high affinity to CXCL3, GRO/MGSA and NAP-2. The chain is C-X-C chemokine receptor type 2 (CXCR2) from Homo sapiens (Human).